We begin with the raw amino-acid sequence, 380 residues long: S-adenosylmethionine synthase (380 aa).

ATP is bound at residue His-15. Asp-17 is a binding site for Mg(2+). Glu-43 is a binding site for K(+). L-methionine is bound by residues Glu-56 and Gln-99. The interval 99–109 is flexible loop; sequence QSPDIAMGIDN. Residues 164–166, 230–231, Asp-239, 245–246, and Lys-266 each bind ATP; these read DAK, RF, and RK. Asp-239 is an L-methionine binding site. Lys-270 is a binding site for L-methionine.

It belongs to the AdoMet synthase family. As to quaternary structure, homotetramer; dimer of dimers. It depends on Mg(2+) as a cofactor. K(+) serves as cofactor.

Its subcellular location is the cytoplasm. It catalyses the reaction L-methionine + ATP + H2O = S-adenosyl-L-methionine + phosphate + diphosphate. Its pathway is amino-acid biosynthesis; S-adenosyl-L-methionine biosynthesis; S-adenosyl-L-methionine from L-methionine: step 1/1. Its function is as follows. Catalyzes the formation of S-adenosylmethionine (AdoMet) from methionine and ATP. The overall synthetic reaction is composed of two sequential steps, AdoMet formation and the subsequent tripolyphosphate hydrolysis which occurs prior to release of AdoMet from the enzyme. In Rickettsia prowazekii (strain Madrid E), this protein is S-adenosylmethionine synthase.